The following is a 106-amino-acid chain: Cell division protein FtsB (106 aa).

The Cytoplasmic segment spans residues 1–3 (MGK). A helical membrane pass occupies residues 4-21 (LTLLLLALLGWLQYSLWL). At 22–106 (GKNGVHDYVR…ASSSQNNLQK (85 aa)) the chain is on the periplasmic side. Residues 40–62 (QGSNAKLKARNDQLFAEIDDLNG) adopt a coiled-coil conformation.

The protein belongs to the FtsB family. As to quaternary structure, part of a complex composed of FtsB, FtsL and FtsQ.

The protein localises to the cell inner membrane. Its function is as follows. Essential cell division protein. May link together the upstream cell division proteins, which are predominantly cytoplasmic, with the downstream cell division proteins, which are predominantly periplasmic. The polypeptide is Cell division protein FtsB (Serratia proteamaculans (strain 568)).